Consider the following 267-residue polypeptide: Phosphoinositide-3-kinase-interacting protein 1 (267 aa).

A signal peptide spans 1 to 21 (MLLAWVHTFLLSNMLLAEAYG). Over 22-172 (SGGCFWDNGH…NSKEKKDLGT (151 aa)) the chain is Extracellular. Residues 24–101 (GCFWDNGHLY…EKRPCEDLRC (78 aa)) form the Kringle domain. 3 disulfide bridges follow: Cys25-Cys101, Cys46-Cys82, and Cys70-Cys96. Positions 91–101 (PEKRPCEDLRC) are enriched in basic and acidic residues. The disordered stretch occupies residues 91–122 (PEKRPCEDLRCPETTSQAPPPPPPSSTTELEE). The helical transmembrane segment at 173–193 (LGYVLGVTMTVIIIAIGVGIV) threads the bilayer. Over 194 to 267 (LGYTYKRGKD…LTDQAGTPGA (74 aa)) the chain is Cytoplasmic.

The protein localises to the cell membrane. In terms of biological role, negative regulator of hepatic phosphatidylinositol 3-kinase (PI3K) activity. The protein is Phosphoinositide-3-kinase-interacting protein 1 (Pik3ip1) of Rattus norvegicus (Rat).